A 428-amino-acid polypeptide reads, in one-letter code: MDTIFALATAQGKAGVAVIRLSGPRAYHTACLLAGPDLPSRGLSVRQLKDSQGARLDDGVVLTFAAPASFTGEDVAEFQIHGSLATTEAVLRCLGDLDGLRLAEPGEFTRRALENGKMSLPQVEGLADLIDAETEAQRKQAQAVLNGALGQLAEGWRAKLIRAAALLEAVIDFADEEVPTDVSPEVRALLAEVRADLEHEIAGVRIAERIRTGFEVAIIGPPNAGKSTLLNMLAGREAALTSEVAGTTRDVIEVRMDLGGLPVTLLDTAGLRETGDLVEGMGIALARRRADQADLRVFLTEDVDAMGVELQPDDLHVLPKADQRPDTANAISGVTGQGVDQLVQRISDVLKTRSSSAGIATRERHRVAMKTALDALDRTGTVLESGPDLYDIAAEELRTAIRALESLVGRIGVETLLDEIFASFCLGK.

Arg-20, Glu-77, and Lys-117 together coordinate (6S)-5-formyl-5,6,7,8-tetrahydrofolate. The TrmE-type G domain maps to 213 to 351 (GFEVAIIGPP…LVQRISDVLK (139 aa)). Position 223 (Asn-223) interacts with K(+). GTP contacts are provided by residues 223–228 (NAGKST), 242–248 (SEVAGTT), and 267–270 (DTAG). Ser-227 contacts Mg(2+). Ser-242, Val-244, and Thr-247 together coordinate K(+). Thr-248 contributes to the Mg(2+) binding site. Lys-428 is a (6S)-5-formyl-5,6,7,8-tetrahydrofolate binding site.

This sequence belongs to the TRAFAC class TrmE-Era-EngA-EngB-Septin-like GTPase superfamily. TrmE GTPase family. In terms of assembly, homodimer. Heterotetramer of two MnmE and two MnmG subunits. It depends on K(+) as a cofactor.

The protein localises to the cytoplasm. In terms of biological role, exhibits a very high intrinsic GTPase hydrolysis rate. Involved in the addition of a carboxymethylaminomethyl (cmnm) group at the wobble position (U34) of certain tRNAs, forming tRNA-cmnm(5)s(2)U34. In Ruegeria pomeroyi (strain ATCC 700808 / DSM 15171 / DSS-3) (Silicibacter pomeroyi), this protein is tRNA modification GTPase MnmE.